A 309-amino-acid polypeptide reads, in one-letter code: 4-hydroxy-3-methylbut-2-enyl diphosphate reductase (309 aa).

Residue cysteine 12 participates in [4Fe-4S] cluster binding. (2E)-4-hydroxy-3-methylbut-2-enyl diphosphate contacts are provided by histidine 43 and histidine 77. Residues histidine 43 and histidine 77 each coordinate dimethylallyl diphosphate. 2 residues coordinate isopentenyl diphosphate: histidine 43 and histidine 77. Position 99 (cysteine 99) interacts with [4Fe-4S] cluster. A (2E)-4-hydroxy-3-methylbut-2-enyl diphosphate-binding site is contributed by histidine 127. A dimethylallyl diphosphate-binding site is contributed by histidine 127. Histidine 127 contributes to the isopentenyl diphosphate binding site. Residue glutamate 129 is the Proton donor of the active site. Threonine 167 is a (2E)-4-hydroxy-3-methylbut-2-enyl diphosphate binding site. Residue cysteine 197 coordinates [4Fe-4S] cluster. 4 residues coordinate (2E)-4-hydroxy-3-methylbut-2-enyl diphosphate: serine 225, serine 226, asparagine 227, and serine 269. Dimethylallyl diphosphate is bound by residues serine 225, serine 226, asparagine 227, and serine 269. Positions 225, 226, 227, and 269 each coordinate isopentenyl diphosphate.

Belongs to the IspH family. [4Fe-4S] cluster serves as cofactor.

It catalyses the reaction isopentenyl diphosphate + 2 oxidized [2Fe-2S]-[ferredoxin] + H2O = (2E)-4-hydroxy-3-methylbut-2-enyl diphosphate + 2 reduced [2Fe-2S]-[ferredoxin] + 2 H(+). The catalysed reaction is dimethylallyl diphosphate + 2 oxidized [2Fe-2S]-[ferredoxin] + H2O = (2E)-4-hydroxy-3-methylbut-2-enyl diphosphate + 2 reduced [2Fe-2S]-[ferredoxin] + 2 H(+). The protein operates within isoprenoid biosynthesis; dimethylallyl diphosphate biosynthesis; dimethylallyl diphosphate from (2E)-4-hydroxy-3-methylbutenyl diphosphate: step 1/1. It participates in isoprenoid biosynthesis; isopentenyl diphosphate biosynthesis via DXP pathway; isopentenyl diphosphate from 1-deoxy-D-xylulose 5-phosphate: step 6/6. Its function is as follows. Catalyzes the conversion of 1-hydroxy-2-methyl-2-(E)-butenyl 4-diphosphate (HMBPP) into a mixture of isopentenyl diphosphate (IPP) and dimethylallyl diphosphate (DMAPP). Acts in the terminal step of the DOXP/MEP pathway for isoprenoid precursor biosynthesis. The chain is 4-hydroxy-3-methylbut-2-enyl diphosphate reductase from Wolbachia pipientis wMel.